Reading from the N-terminus, the 200-residue chain is HTH-type transcriptional regulator BetI (200 aa).

The HTH tetR-type domain occupies serine 8–leucine 68. The H-T-H motif DNA-binding region spans serine 31–phenylalanine 50.

Its pathway is amine and polyamine biosynthesis; betaine biosynthesis via choline pathway [regulation]. Repressor involved in the biosynthesis of the osmoprotectant glycine betaine. It represses transcription of the choline transporter BetT and the genes of BetAB involved in the synthesis of glycine betaine. The polypeptide is HTH-type transcriptional regulator BetI (Proteus mirabilis (strain HI4320)).